The primary structure comprises 610 residues: MCGIVGYVGQKKATDILVEGLSKLEYRGYDSAGVAVLEDNKIKAEKHKGRLANLEGMLNENPIEGGIGIGHTRWATHGEPSDVNSHPHLNNKETIAVVHNGIIENYNELRNWLMEKGYEFKSETDTEVIPNLVDFYYKGDLLDAVMEATKHMEGSYAIGVICNDEPEKLVAVRKDSPLIVGLGEKEYFIASDIPAVLNHTREVYLLEDKEFVVLTNDGVTLFDEEKNPVEKEVYHITWNVDAAEKGGYEDFMLKEINEQPKAIKDTMTSRIMEEKEVTLDDISITKEYLDNVDRVYIVACGTAYHAGVIGKYAIEKLVRIPVEVDIASEFRYRDAVITDKTLIIVLSQSGETADTLAVLRDGQAKGARVLAVTNVVGSSVSREANDVLYTWAGPEIAVASTKAYVTQLIAMYTLALHFAELKGSKSVEEIEEIKKAMLELPEKVEEILKNTDLIKEFAVKASTEKDLYFLGRGMDYGVAMEGSLKLKEISYIHSEAYAGGELKHGPIALIEKDIPVISLLTQRELMDKMISNVQEVVTRGANVLGVCFKGDMEESKRKMFEGLIEIPETLSLLSPVLSVVPLQLFSYYVAKAKGFDVDKPRNLAKSVTVE.

Cys-2 (nucleophile; for GATase activity) is an active-site residue. Positions 2–217 (CGIVGYVGQK…DKEFVVLTND (216 aa)) constitute a Glutamine amidotransferase type-2 domain. SIS domains follow at residues 284-424 (ITKE…LKGS) and 453-600 (LIKE…VDKP). The active-site For Fru-6P isomerization activity is the Lys-605.

Homodimer.

It localises to the cytoplasm. The catalysed reaction is D-fructose 6-phosphate + L-glutamine = D-glucosamine 6-phosphate + L-glutamate. In terms of biological role, catalyzes the first step in hexosamine metabolism, converting fructose-6P into glucosamine-6P using glutamine as a nitrogen source. The protein is Glutamine--fructose-6-phosphate aminotransferase [isomerizing] of Clostridium perfringens (strain 13 / Type A).